A 90-amino-acid polypeptide reads, in one-letter code: Sakacin-A immunity factor (90 aa).

In terms of biological role, imparts immunity to sakacin-A to naturally sensitive host strains. The polypeptide is Sakacin-A immunity factor (saiA) (Latilactobacillus sakei (Lactobacillus sakei)).